A 491-amino-acid polypeptide reads, in one-letter code: Putative diacyglycerol O-acyltransferase MT2557 (491 aa).

Histidine 145 (proton acceptor) is an active-site residue.

This sequence belongs to the long-chain O-acyltransferase family.

It catalyses the reaction an acyl-CoA + a 1,2-diacyl-sn-glycerol = a triacyl-sn-glycerol + CoA. Its pathway is glycerolipid metabolism; triacylglycerol biosynthesis. This Mycobacterium tuberculosis (strain CDC 1551 / Oshkosh) protein is Putative diacyglycerol O-acyltransferase MT2557.